A 152-amino-acid chain; its full sequence is Ribosome maturation factor RimP (152 aa).

Belongs to the RimP family.

The protein localises to the cytoplasm. Its function is as follows. Required for maturation of 30S ribosomal subunits. This Pseudomonas aeruginosa (strain LESB58) protein is Ribosome maturation factor RimP.